Here is a 478-residue protein sequence, read N- to C-terminus: Cytochrome c-552 (478 aa).

A signal peptide spans 1–26 (MTRIKINARRIFSLLIPFFFFTSVHA). A heme c-binding site is contributed by His-94. Heme is bound by residues Cys-122, Cys-125, and Lys-126. Heme c-binding residues include Cys-160, Cys-163, His-164, Cys-209, Cys-212, and His-213. Residues Glu-215, Tyr-216, Lys-261, and Gln-263 each contribute to the Ca(2+) site. Residue Tyr-216 participates in substrate binding. Substrate is bound at residue His-264. His-275, Cys-282, Cys-285, His-286, His-301, Cys-314, Cys-317, His-318, and His-393 together coordinate heme c.

This sequence belongs to the cytochrome c-552 family. Ca(2+) serves as cofactor. It depends on heme c as a cofactor.

It is found in the periplasm. The enzyme catalyses 6 Fe(III)-[cytochrome c] + NH4(+) + 2 H2O = 6 Fe(II)-[cytochrome c] + nitrite + 8 H(+). It functions in the pathway nitrogen metabolism; nitrate reduction (assimilation). Catalyzes the reduction of nitrite to ammonia, consuming six electrons in the process. In Escherichia coli O157:H7 (strain EC4115 / EHEC), this protein is Cytochrome c-552.